A 181-amino-acid chain; its full sequence is uncharacterized protein (181 aa).

This sequence belongs to the M.jannaschii MJ0150/MJ0739/MJ0745/MJ1460/MJ1642 family.

This is an uncharacterized protein from Methanocaldococcus jannaschii (strain ATCC 43067 / DSM 2661 / JAL-1 / JCM 10045 / NBRC 100440) (Methanococcus jannaschii).